Consider the following 111-residue polypeptide: Probable 4-amino-4-deoxy-L-arabinose-phosphoundecaprenol flippase subunit ArnE (111 aa).

3 helical membrane-spanning segments follow: residues 37 to 57 (LIWLGLSVIFLAGGMLLWLKL), 65 to 85 (QAYPFLSINLILVTLSGHFFF), and 91 to 111 (LQHWLGIGIMMVGILLLGQGI).

Belongs to the ArnE family. Heterodimer of ArnE and ArnF.

It localises to the cell inner membrane. It participates in bacterial outer membrane biogenesis; lipopolysaccharide biosynthesis. In terms of biological role, translocates 4-amino-4-deoxy-L-arabinose-phosphoundecaprenol (alpha-L-Ara4N-phosphoundecaprenol) from the cytoplasmic to the periplasmic side of the inner membrane. The polypeptide is Probable 4-amino-4-deoxy-L-arabinose-phosphoundecaprenol flippase subunit ArnE (Hamiltonella defensa subsp. Acyrthosiphon pisum (strain 5AT)).